We begin with the raw amino-acid sequence, 349 residues long: UDP-N-acetylenolpyruvoylglucosamine reductase (349 aa).

One can recognise an FAD-binding PCMH-type domain in the interval 26 to 197 (FDARARVAAR…VAVTFRLPKA (172 aa)). R173 is an active-site residue. S249 (proton donor) is an active-site residue. The active site involves E345.

Belongs to the MurB family. The cofactor is FAD.

The protein localises to the cytoplasm. It catalyses the reaction UDP-N-acetyl-alpha-D-muramate + NADP(+) = UDP-N-acetyl-3-O-(1-carboxyvinyl)-alpha-D-glucosamine + NADPH + H(+). It functions in the pathway cell wall biogenesis; peptidoglycan biosynthesis. Cell wall formation. The protein is UDP-N-acetylenolpyruvoylglucosamine reductase of Burkholderia pseudomallei (strain K96243).